A 543-amino-acid polypeptide reads, in one-letter code: CTP synthase (543 aa).

Positions 1-265 (MTRFVFITGG…DQEVLRYFDL (265 aa)) are amidoligase domain. Serine 13 is a binding site for CTP. Position 13 (serine 13) interacts with UTP. 14-19 (SLGKGI) serves as a coordination point for ATP. Tyrosine 54 lines the L-glutamine pocket. Aspartate 71 contributes to the ATP binding site. Residues aspartate 71 and glutamate 139 each contribute to the Mg(2+) site. CTP-binding positions include 146–148 (DIE), 186–191 (KTKPTQ), and lysine 222. UTP is bound by residues 186–191 (KTKPTQ) and lysine 222. The Glutamine amidotransferase type-1 domain occupies 291-542 (RVAIVGKYTA…IAAAVKEAHR (252 aa)). Glycine 354 contributes to the L-glutamine binding site. The Nucleophile; for glutamine hydrolysis role is filled by cysteine 381. L-glutamine-binding positions include 382-385 (FGMQ), glutamate 405, and arginine 470. Active-site residues include histidine 515 and glutamate 517.

It belongs to the CTP synthase family. Homotetramer.

The catalysed reaction is UTP + L-glutamine + ATP + H2O = CTP + L-glutamate + ADP + phosphate + 2 H(+). The enzyme catalyses L-glutamine + H2O = L-glutamate + NH4(+). It carries out the reaction UTP + NH4(+) + ATP = CTP + ADP + phosphate + 2 H(+). It functions in the pathway pyrimidine metabolism; CTP biosynthesis via de novo pathway; CTP from UDP: step 2/2. With respect to regulation, allosterically activated by GTP, when glutamine is the substrate; GTP has no effect on the reaction when ammonia is the substrate. The allosteric effector GTP functions by stabilizing the protein conformation that binds the tetrahedral intermediate(s) formed during glutamine hydrolysis. Inhibited by the product CTP, via allosteric rather than competitive inhibition. In terms of biological role, catalyzes the ATP-dependent amination of UTP to CTP with either L-glutamine or ammonia as the source of nitrogen. Regulates intracellular CTP levels through interactions with the four ribonucleotide triphosphates. The sequence is that of CTP synthase from Gluconobacter oxydans (strain 621H) (Gluconobacter suboxydans).